The following is a 197-amino-acid chain: uncharacterized protein (197 aa).

An N-terminal signal peptide occupies residues 1–23 (MSARAPKELRLALPPCLLNRTFA). The Extracellular portion of the chain corresponds to 24-61 (SPNASGSGNTGARGPGAVGSGTCITQVGQQLFQSFSST). Asparagine 26 is a glycosylation site (N-linked (GlcNAc...) asparagine). The helical transmembrane segment at 62–82 (LVLIVLVTLIFCLIVLSLSTF) threads the bilayer. Topologically, residues 83–197 (HIHKRRMKKR…EGLLQTVVLS (115 aa)) are cytoplasmic. Residues 94 to 180 (MQRAQEEYER…SSPQGAHAAS (87 aa)) are disordered. Composition is skewed to basic and acidic residues over residues 96 to 107 (RAQEEYERDHCS) and 125 to 136 (HAKETRLERQPR). Over residues 141 to 161 (CAPSNASSLSSSSPGLPCQGP) the composition is skewed to low complexity. Pro residues predominate over residues 162-171 (CAPPPPPPAS).

It localises to the membrane. This is an uncharacterized protein from Homo sapiens (Human).